The chain runs to 80 residues: uncharacterized protein (80 aa).

A signal peptide spans 1 to 23 (MKWNNMLKAAGIAVLLFSVFAYA).

This is an uncharacterized protein from Bacillus subtilis (strain 168).